The sequence spans 72 residues: Translation initiation factor IF-1 (72 aa).

In terms of domain architecture, S1-like spans Met-1–Lys-72.

It belongs to the IF-1 family. Component of the 30S ribosomal translation pre-initiation complex which assembles on the 30S ribosome in the order IF-2 and IF-3, IF-1 and N-formylmethionyl-tRNA(fMet); mRNA recruitment can occur at any time during PIC assembly.

It localises to the cytoplasm. Functionally, one of the essential components for the initiation of protein synthesis. Stabilizes the binding of IF-2 and IF-3 on the 30S subunit to which N-formylmethionyl-tRNA(fMet) subsequently binds. Helps modulate mRNA selection, yielding the 30S pre-initiation complex (PIC). Upon addition of the 50S ribosomal subunit IF-1, IF-2 and IF-3 are released leaving the mature 70S translation initiation complex. This Caulobacter vibrioides (strain ATCC 19089 / CIP 103742 / CB 15) (Caulobacter crescentus) protein is Translation initiation factor IF-1.